Reading from the N-terminus, the 308-residue chain is Cell division protein ZipA (308 aa).

The Periplasmic portion of the chain corresponds to M1 to R5. The helical transmembrane segment at L6–T26 threads the bilayer. Over S27 to N308 the chain is Cytoplasmic. Residues F43–F90 form a disordered region. The span at E59 to P82 shows a compositional bias: basic and acidic residues.

Belongs to the ZipA family. In terms of assembly, interacts with FtsZ via their C-terminal domains.

The protein resides in the cell inner membrane. Essential cell division protein that stabilizes the FtsZ protofilaments by cross-linking them and that serves as a cytoplasmic membrane anchor for the Z ring. Also required for the recruitment to the septal ring of downstream cell division proteins. The protein is Cell division protein ZipA of Aliivibrio salmonicida (strain LFI1238) (Vibrio salmonicida (strain LFI1238)).